The primary structure comprises 424 residues: Dihydroorotase (424 aa).

Zn(2+)-binding residues include His-58 and His-60. Substrate-binding positions include 60–62 (HLR) and Asn-92. The Zn(2+) site is built by Asp-150, His-177, and His-230. Residue Asn-276 participates in substrate binding. Asp-303 contacts Zn(2+). Residue Asp-303 is part of the active site. Substrate is bound by residues His-307 and 321-322 (FG).

The protein belongs to the metallo-dependent hydrolases superfamily. DHOase family. Class I DHOase subfamily. It depends on Zn(2+) as a cofactor.

It catalyses the reaction (S)-dihydroorotate + H2O = N-carbamoyl-L-aspartate + H(+). The protein operates within pyrimidine metabolism; UMP biosynthesis via de novo pathway; (S)-dihydroorotate from bicarbonate: step 3/3. Functionally, catalyzes the reversible cyclization of carbamoyl aspartate to dihydroorotate. The sequence is that of Dihydroorotase from Staphylococcus aureus (strain MRSA252).